Here is an 88-residue protein sequence, read N- to C-terminus: Small ribosomal subunit protein uS15 (88 aa).

The protein belongs to the universal ribosomal protein uS15 family. Part of the 30S ribosomal subunit. Forms a bridge to the 50S subunit in the 70S ribosome, contacting the 23S rRNA.

One of the primary rRNA binding proteins, it binds directly to 16S rRNA where it helps nucleate assembly of the platform of the 30S subunit by binding and bridging several RNA helices of the 16S rRNA. Its function is as follows. Forms an intersubunit bridge (bridge B4) with the 23S rRNA of the 50S subunit in the ribosome. In Mycoplasmopsis pulmonis (strain UAB CTIP) (Mycoplasma pulmonis), this protein is Small ribosomal subunit protein uS15.